Here is a 203-residue protein sequence, read N- to C-terminus: 5-formyltetrahydrofolate cyclo-ligase (203 aa).

The residue at position 2 (alanine 2) is an N-acetylalanine. ATP-binding positions include 10–14 (KRSLR) and arginine 14. Substrate-binding positions include leucine 56, glutamate 61, and 148–152 (RGKGY). An ATP-binding site is contributed by 145-153 (RLGRGKGYY). Residues aspartate 154 and aspartate 189 each coordinate Mg(2+).

This sequence belongs to the 5-formyltetrahydrofolate cyclo-ligase family. Monomer. Mg(2+) is required as a cofactor.

It is found in the cytoplasm. It catalyses the reaction (6S)-5-formyl-5,6,7,8-tetrahydrofolate + ATP = (6R)-5,10-methenyltetrahydrofolate + ADP + phosphate. Contributes to tetrahydrofolate metabolism. Helps regulate carbon flow through the folate-dependent one-carbon metabolic network that supplies carbon for the biosynthesis of purines, thymidine and amino acids. Catalyzes the irreversible conversion of 5-formyltetrahydrofolate (5-FTHF) to yield 5,10-methenyltetrahydrofolate. This is 5-formyltetrahydrofolate cyclo-ligase (MTHFS) from Homo sapiens (Human).